Here is a 171-residue protein sequence, read N- to C-terminus: MPRSQRNDNFIDKTFTIVADILLRVIPTTQREKEAFTYYRDGMSAQSEGEYAEALQNYYKAMRLEIDPYDRSYILYNIGLIHTSNGEHAKALEYYSQALERNPSLPQAFNNMAVICHYRGEQAIQQGDPETSEAWFDQAAEYWKQAIALAPSNYIEAQNWLKITGRLKEWV.

TPR repeat units lie at residues 35–68, 72–105, and 120–153; these read AFTY…EIDP, SYIL…NPSL, and GEQA…APSN.

Belongs to the Ycf3 family.

Its subcellular location is the plastid. The protein resides in the chloroplast thylakoid membrane. Essential for the assembly of the photosystem I (PSI) complex. May act as a chaperone-like factor to guide the assembly of the PSI subunits. This chain is Photosystem I assembly protein Ycf3, found in Angiopteris evecta (Mule's foot fern).